Consider the following 660-residue polypeptide: tRNA 5-methylaminomethyl-2-thiouridine biosynthesis bifunctional protein MnmC (660 aa).

The segment at 1–233 (MTHSHAQLVW…KRHISHGWIA (233 aa)) is tRNA (mnm(5)s(2)U34)-methyltransferase. Residues 260–660 (VGGGLAGAAS…IRRKLDPDAL (401 aa)) are FAD-dependent cmnm(5)s(2)U34 oxidoreductase.

In the N-terminal section; belongs to the methyltransferase superfamily. tRNA (mnm(5)s(2)U34)-methyltransferase family. The protein in the C-terminal section; belongs to the DAO family. It depends on FAD as a cofactor.

Its subcellular location is the cytoplasm. The catalysed reaction is 5-aminomethyl-2-thiouridine(34) in tRNA + S-adenosyl-L-methionine = 5-methylaminomethyl-2-thiouridine(34) in tRNA + S-adenosyl-L-homocysteine + H(+). Functionally, catalyzes the last two steps in the biosynthesis of 5-methylaminomethyl-2-thiouridine (mnm(5)s(2)U) at the wobble position (U34) in tRNA. Catalyzes the FAD-dependent demodification of cmnm(5)s(2)U34 to nm(5)s(2)U34, followed by the transfer of a methyl group from S-adenosyl-L-methionine to nm(5)s(2)U34, to form mnm(5)s(2)U34. This is tRNA 5-methylaminomethyl-2-thiouridine biosynthesis bifunctional protein MnmC from Chromobacterium violaceum (strain ATCC 12472 / DSM 30191 / JCM 1249 / CCUG 213 / NBRC 12614 / NCIMB 9131 / NCTC 9757 / MK).